The primary structure comprises 125 residues: GKMKFKDCGKGEVTELDITDCSGDFCVIHRGKPLTLEAKFAANQDTTKATIKVLAKVAGTPIQVPGLETDGCKFVKCPIKKGDPIDFKYTTTVPAILPKVKAEVTAELVGDHGVLACGRFGRQVE.

It belongs to the NPC2 family.

It is found in the secreted. The protein is Mite group 2 allergen Gly d 2.02 of Glycyphagus domesticus (House itch mite).